We begin with the raw amino-acid sequence, 63 residues long: Large ribosomal subunit protein uL29 (63 aa).

It belongs to the universal ribosomal protein uL29 family.

The sequence is that of Large ribosomal subunit protein uL29 from Flavobacterium johnsoniae (strain ATCC 17061 / DSM 2064 / JCM 8514 / BCRC 14874 / CCUG 350202 / NBRC 14942 / NCIMB 11054 / UW101) (Cytophaga johnsonae).